Here is a 211-residue protein sequence, read N- to C-terminus: Fin bud initiation factor homolog (211 aa).

The first 18 residues, 1–18 (MVFLKFFCMSFFCHLCQG), serve as a signal peptide directing secretion. Asparagine 30 carries an N-linked (GlcNAc...) asparagine glycan.

This sequence belongs to the FIBIN family. As to quaternary structure, homodimer; disulfide-linked. Seems to also exist as monomers.

It localises to the secreted. The protein localises to the golgi apparatus. The protein resides in the endoplasmic reticulum. This chain is Fin bud initiation factor homolog (FIBIN), found in Homo sapiens (Human).